A 194-amino-acid polypeptide reads, in one-letter code: MADIPATSEGSANTSEAVVEYQQPTPEFLQRKIYFLVDQLRTYHSELPENLQTRISYDLLTELANCVLNDGIFVIVKALMELQHETERHLIKIRMQAENEYEIEVAEWRSKIKDPEELRHILGLMKIKHTKKLHESDTKIIEILDQKVNDQQSTLQKAGVPGFYVTENPKEIKIQMFLLDFILRLSRLKYEPGK.

This sequence belongs to the gonadal family. In stage 6-14 egg chamber nurse cells and oocytes of adult females and spermatocyte cysts and bundles of maturing sperm of larval, pupal and adult males.

The protein is Gonadal protein gdl (gdl) of Drosophila melanogaster (Fruit fly).